The following is a 433-amino-acid chain: 23S rRNA (uracil(1939)-C(5))-methyltransferase RlmD (433 aa).

A TRAM domain is found at 10–68 (RTTTRQIITVSVNDLDSFGQGVARHNGKTLFIPGLLPQENAEVAVTEDKKQYARAKVVR). Cys-81, Cys-87, Cys-90, and Cys-162 together coordinate [4Fe-4S] cluster. S-adenosyl-L-methionine contacts are provided by Gln-265, Phe-294, Asn-299, Glu-315, Asn-342, and Asp-363. Catalysis depends on Cys-389, which acts as the Nucleophile.

Belongs to the class I-like SAM-binding methyltransferase superfamily. RNA M5U methyltransferase family. RlmD subfamily.

It carries out the reaction uridine(1939) in 23S rRNA + S-adenosyl-L-methionine = 5-methyluridine(1939) in 23S rRNA + S-adenosyl-L-homocysteine + H(+). Functionally, catalyzes the formation of 5-methyl-uridine at position 1939 (m5U1939) in 23S rRNA. This is 23S rRNA (uracil(1939)-C(5))-methyltransferase RlmD from Shigella flexneri.